The primary structure comprises 395 residues: Putative nickel insertion protein (395 aa).

The protein belongs to the LarC family.

The sequence is that of Putative nickel insertion protein from Roseiflexus castenholzii (strain DSM 13941 / HLO8).